Reading from the N-terminus, the 318-residue chain is DNA polymerase IV (318 aa).

A UmuC domain is found at 6-186; that stretch reads IIHIDMDAFY…LPLGKIPGVG (181 aa). Mg(2+) is bound by residues aspartate 10 and aspartate 104. Residue glutamate 105 is part of the active site.

This sequence belongs to the DNA polymerase type-Y family. In terms of assembly, monomer. It depends on Mg(2+) as a cofactor.

It localises to the cytoplasm. The enzyme catalyses DNA(n) + a 2'-deoxyribonucleoside 5'-triphosphate = DNA(n+1) + diphosphate. Its function is as follows. Poorly processive, error-prone DNA polymerase involved in untargeted mutagenesis. Copies undamaged DNA at stalled replication forks, which arise in vivo from mismatched or misaligned primer ends. These misaligned primers can be extended by PolIV. Exhibits no 3'-5' exonuclease (proofreading) activity. May be involved in translesional synthesis, in conjunction with the beta clamp from PolIII. The chain is DNA polymerase IV from Neisseria meningitidis serogroup B (strain ATCC BAA-335 / MC58).